We begin with the raw amino-acid sequence, 107 residues long: N(4)-acetylcytidine amidohydrolase (107 aa).

The region spanning 6–102 (TFYRRFQADI…RLYVISFSLV (97 aa)) is the ASCH domain. Catalysis depends on lysine 20, which acts as the Proton acceptor. Catalysis depends on threonine 23, which acts as the Nucleophile. Glutamate 73 acts as the Proton donor in catalysis.

It belongs to the N(4)-acetylcytidine amidohydrolase family.

The enzyme catalyses N(4)-acetylcytidine + H2O = cytidine + acetate + H(+). It catalyses the reaction N(4)-acetyl-2'-deoxycytidine + H2O = 2'-deoxycytidine + acetate + H(+). The catalysed reaction is N(4)-acetylcytosine + H2O = cytosine + acetate + H(+). Catalyzes the hydrolysis of N(4)-acetylcytidine (ac4C). This Edwardsiella ictaluri (strain 93-146) protein is N(4)-acetylcytidine amidohydrolase.